Reading from the N-terminus, the 175-residue chain is CDP-archaeol synthase (175 aa).

A run of 4 helical transmembrane segments spans residues 41 to 61 (GLFSGIFCGFLAGCIEIWLSM), 78 to 98 (YASALIVVLALPSGALFGDMF), 122 to 142 (FVVGAWFFTYLAAPEWFVSNF), and 150 to 170 (VLIMTPLLHLTTNIIGYFIGV).

This sequence belongs to the CDP-archaeol synthase family. Mg(2+) is required as a cofactor.

Its subcellular location is the cell membrane. It catalyses the reaction 2,3-bis-O-(geranylgeranyl)-sn-glycerol 1-phosphate + CTP + H(+) = CDP-2,3-bis-O-(geranylgeranyl)-sn-glycerol + diphosphate. Its pathway is membrane lipid metabolism; glycerophospholipid metabolism. Functionally, catalyzes the formation of CDP-2,3-bis-(O-geranylgeranyl)-sn-glycerol (CDP-archaeol) from 2,3-bis-(O-geranylgeranyl)-sn-glycerol 1-phosphate (DGGGP) and CTP. This reaction is the third ether-bond-formation step in the biosynthesis of archaeal membrane lipids. In Methanosarcina acetivorans (strain ATCC 35395 / DSM 2834 / JCM 12185 / C2A), this protein is CDP-archaeol synthase.